Here is a 324-residue protein sequence, read N- to C-terminus: Phospho-N-acetylmuramoyl-pentapeptide-transferase (324 aa).

10 consecutive transmembrane segments (helical) span residues I5–I25, P52–A72, V76–F96, F117–S137, W147–S167, L176–W196, V203–H223, V227–L247, L250–I270, and I302–V322.

It belongs to the glycosyltransferase 4 family. MraY subfamily. Requires Mg(2+) as cofactor.

It localises to the cell membrane. It catalyses the reaction UDP-N-acetyl-alpha-D-muramoyl-L-alanyl-gamma-D-glutamyl-meso-2,6-diaminopimeloyl-D-alanyl-D-alanine + di-trans,octa-cis-undecaprenyl phosphate = di-trans,octa-cis-undecaprenyl diphospho-N-acetyl-alpha-D-muramoyl-L-alanyl-D-glutamyl-meso-2,6-diaminopimeloyl-D-alanyl-D-alanine + UMP. The protein operates within cell wall biogenesis; peptidoglycan biosynthesis. Functionally, catalyzes the initial step of the lipid cycle reactions in the biosynthesis of the cell wall peptidoglycan: transfers peptidoglycan precursor phospho-MurNAc-pentapeptide from UDP-MurNAc-pentapeptide onto the lipid carrier undecaprenyl phosphate, yielding undecaprenyl-pyrophosphoryl-MurNAc-pentapeptide, known as lipid I. In Geobacillus thermodenitrificans (strain NG80-2), this protein is Phospho-N-acetylmuramoyl-pentapeptide-transferase.